A 211-amino-acid chain; its full sequence is Arginine exporter protein ArgO (211 aa).

The next 6 membrane-spanning stretches (helical) occupy residues 1 to 21, 37 to 57, 68 to 88, 111 to 131, 147 to 167, and 179 to 199; these read MISY…PLGP, LMIA…GIFG, LLAL…FGAL, IIAT…DTFV, WFAL…ALLA, and AQRI…FQLA.

It belongs to the LysE/ArgO transporter (TC 2.A.75) family.

Its subcellular location is the cell inner membrane. The catalysed reaction is L-arginine(in) = L-arginine(out). In terms of biological role, involved in the export of arginine. Important to control the intracellular level of arginine and the correct balance between arginine and lysine. The protein is Arginine exporter protein ArgO of Salmonella schwarzengrund (strain CVM19633).